Here is a 305-residue protein sequence, read N- to C-terminus: GTP cyclohydrolase FolE2 (305 aa).

Belongs to the GTP cyclohydrolase IV family.

The enzyme catalyses GTP + H2O = 7,8-dihydroneopterin 3'-triphosphate + formate + H(+). It functions in the pathway cofactor biosynthesis; 7,8-dihydroneopterin triphosphate biosynthesis; 7,8-dihydroneopterin triphosphate from GTP: step 1/1. Its function is as follows. Converts GTP to 7,8-dihydroneopterin triphosphate. The polypeptide is GTP cyclohydrolase FolE2 (Xanthomonas axonopodis pv. citri (strain 306)).